Reading from the N-terminus, the 455-residue chain is MTSDSTVDKILAGKYPAKQHAENVVERLLHVHPDLTDGVIYLESQRSKLYENSDQEVPFRQRRYFYYLSGCDLADSYLTYSIRDRKLTLFIPPIDPASVLWSGLPLSNSEALEKYDVDEVLPTSATALPTTSYSSLMFVIESQTSRTFHLQNTESLEPAIERARAIKDEYEVALIKKANRISALAHHSCLRAIKSAGNEREIEAVFTKECIANGAPKQAYSGIFGSGRSASTLHYVHNNQPLAGKLNLLLDAGAEYNNYASDITRTFPISGQFTKESREVYDIVLDMQKQCLAASKAGAVWDDIHILAHKVAIQGLLKIGVLRNGSVDEILSNRTSTAFLPHGLGHYLGMDTHDCGGNPNYADPDPMFKYLRKRGPLPAGAVITVEPGIYFCEFIIKPYLEDEKHAKYIDKDVLNRYWDVGGVRIEDNILITEGGYENLTNVAKEVDDMLKFING.

Mn(2+)-binding residues include D251, D262, E386, and E426.

The protein belongs to the peptidase M24B family. It depends on Mn(2+) as a cofactor.

It catalyses the reaction Release of any N-terminal amino acid, including proline, that is linked to proline, even from a dipeptide or tripeptide.. Functionally, catalyzes the removal of a penultimate prolyl residue from the N-termini of peptides. This chain is Probable Xaa-Pro aminopeptidase GSTUM_00008071001, found in Tuber melanosporum (strain Mel28) (Perigord black truffle).